The primary structure comprises 123 residues: Preprofallaxidin-3 (123 aa).

Positions 1–22 (MASLKKSLFLVLFLGLVSLSIC) are cleaved as a signal peptide. Residues 23 to 46 (EEKKRENEDDAEDENHEEESEEKR) constitute a propeptide that is removed on maturation. Positions 26 to 46 (KRENEDDAEDENHEEESEEKR) are disordered. A compositionally biased stretch (acidic residues) spans 30–42 (EDDAEDENHEEES). A Leucine amide modification is found at Leu62. Positions 66–70 (SEEKR) are excised as a propeptide. Residue Phe74 is modified to Phenylalanine amide. The propeptide occupies 78–82 (SEEKR). Phe88 carries the phenylalanine amide modification. The propeptide occupies 92-96 (SEEKR). At Ile102 the chain carries Isoleucine amide. Positions 106–110 (SEEKR) are excised as a propeptide. Position 116 is an isoleucine amide (Ile116). The propeptide occupies 120 to 123 (KKKK).

The protein belongs to the frog skin active peptide (FSAP) family. Brevinin subfamily. Expressed by the skin glands.

The protein resides in the secreted. In terms of biological role, fallaxidin-1.1 shows no antibacterial activity against Gram-positive or Gram-negative bacteria. Does not inhibit the formation of NO by neuronal nitric oxide synthase. Has no effect on splenocyte proliferation or smooth muscle contraction. Fallaxidin-1.2 shows no antibacterial activity against Gram-positive or Gram-negative bacteria. Does not inhibit the formation of NO by neuronal nitric oxide synthase. Has no effect on splenocyte proliferation or smooth muscle contraction. Functionally, fallaxidin-1.3 shows no antibacterial activity against Gram-positive or Gram-negative bacteria. Does not inhibit the formation of NO by neuronal nitric oxide synthase. Has no effect on splenocyte proliferation or smooth muscle contraction. Its function is as follows. Fallaxidin-3.2 shows antibacterial activity against the Gram-positive bacteria E.faecalis (MIC=100 uM) and L.lactis (MIC=500 uM). No antibacterial activity against the Gram-positive bacteria B.cereus, L.innocua, M.luteus, S.epidermidis, S.uberis and S.aureus, or the Gram-negative bacteria E.cloacae and E.coli. The sequence is that of Preprofallaxidin-3 from Litoria fallax (Eastern dwarf tree frog).